The chain runs to 502 residues: Lysine--tRNA ligase (502 aa).

Residues E409 and E416 each coordinate Mg(2+).

This sequence belongs to the class-II aminoacyl-tRNA synthetase family. In terms of assembly, homodimer. Mg(2+) serves as cofactor.

It is found in the cytoplasm. It catalyses the reaction tRNA(Lys) + L-lysine + ATP = L-lysyl-tRNA(Lys) + AMP + diphosphate. This is Lysine--tRNA ligase from Prochlorococcus marinus (strain SARG / CCMP1375 / SS120).